The primary structure comprises 108 residues: Protein SMALL AUXIN UP-REGULATED RNA 8 (108 aa).

The protein belongs to the ARG7 family. Expressed in seedlings, leaves and flowers.

The protein resides in the cell membrane. Provide a mechanistic link between auxin and plasma membrane H(+)-ATPases (PM H(+)-ATPases, e.g. AHA1 and AHA2), and triggers PM H(+)-ATPases activity by promoting phosphorylation of their C-terminal autoinhibitory domain as a result of PP2C-D subfamily of type 2C phosphatases inhibition, thus leading to the acidification of the apoplast and the facilitation of solutes and water uptake to drive cell expansion. Triggers plant growth probably by promoting cell elongation. Regulates branch angles and bending. This chain is Protein SMALL AUXIN UP-REGULATED RNA 8, found in Arabidopsis thaliana (Mouse-ear cress).